The primary structure comprises 759 residues: Multifunctional tryptophan biosynthesis protein (759 aa).

The Glutamine amidotransferase type-1 domain occupies 27–223 (PIVMIDNYDS…LNLTAGTWEE (197 aa)). Residue 80–82 (GPG) coordinates L-glutamine. The active-site Nucleophile; for GATase activity is cysteine 108. L-glutamine contacts are provided by residues glutamine 112 and 158-159 (SL). Catalysis depends on for GATase activity residues histidine 197 and glutamate 199. Positions 257–519 (ILEKIHAQRL…DPAAFARELL (263 aa)) are indole-3-glycerol phosphate synthase. Positions 536–759 (LVKVCGTRSL…KAFINAVKEL (224 aa)) are N-(5'-phosphoribosyl)anthranilate isomerase.

The enzyme catalyses N-(5-phospho-beta-D-ribosyl)anthranilate = 1-(2-carboxyphenylamino)-1-deoxy-D-ribulose 5-phosphate. The catalysed reaction is 1-(2-carboxyphenylamino)-1-deoxy-D-ribulose 5-phosphate + H(+) = (1S,2R)-1-C-(indol-3-yl)glycerol 3-phosphate + CO2 + H2O. It carries out the reaction chorismate + L-glutamine = anthranilate + pyruvate + L-glutamate + H(+). It participates in amino-acid biosynthesis; L-tryptophan biosynthesis; L-tryptophan from chorismate: step 1/5. It functions in the pathway amino-acid biosynthesis; L-tryptophan biosynthesis; L-tryptophan from chorismate: step 3/5. Its pathway is amino-acid biosynthesis; L-tryptophan biosynthesis; L-tryptophan from chorismate: step 4/5. Its function is as follows. Trifunctional enzyme bearing the Gln amidotransferase (GATase) domain of anthranilate synthase, indole-glycerolphosphate synthase, and phosphoribosylanthranilate isomerase activities. The chain is Multifunctional tryptophan biosynthesis protein (trp1) from Schizosaccharomyces pombe (strain 972 / ATCC 24843) (Fission yeast).